The primary structure comprises 364 residues: DNA replication and repair protein RecF (364 aa).

30-37 (GANGSGKT) provides a ligand contact to ATP.

The protein belongs to the RecF family.

The protein localises to the cytoplasm. Its function is as follows. The RecF protein is involved in DNA metabolism; it is required for DNA replication and normal SOS inducibility. RecF binds preferentially to single-stranded, linear DNA. It also seems to bind ATP. The chain is DNA replication and repair protein RecF from Sodalis glossinidius.